The sequence spans 218 residues: Cytochrome c biogenesis ATP-binding export protein CcmA (218 aa).

In terms of domain architecture, ABC transporter spans Leu-12–Val-217. An ATP-binding site is contributed by Gly-44–Ser-51.

The protein belongs to the ABC transporter superfamily. CcmA exporter (TC 3.A.1.107) family. In terms of assembly, the complex is composed of two ATP-binding proteins (CcmA) and two transmembrane proteins (CcmB).

It localises to the cell inner membrane. The catalysed reaction is heme b(in) + ATP + H2O = heme b(out) + ADP + phosphate + H(+). Functionally, part of the ABC transporter complex CcmAB involved in the biogenesis of c-type cytochromes; once thought to export heme, this seems not to be the case, but its exact role is uncertain. Responsible for energy coupling to the transport system. In Idiomarina loihiensis (strain ATCC BAA-735 / DSM 15497 / L2-TR), this protein is Cytochrome c biogenesis ATP-binding export protein CcmA.